The primary structure comprises 350 residues: Inhibitor of nuclear factor kappa-B kinase-interacting protein (350 aa).

Positions methionine 1–glycine 11 are enriched in basic residues. Positions methionine 1–glycine 39 are disordered. A helical membrane pass occupies residues cysteine 46–valine 62. The N-linked (GlcNAc...) asparagine glycan is linked to asparagine 144. Residues glycine 184–leucine 217 are a coiled coil. N-linked (GlcNAc...) asparagine glycosylation is present at asparagine 328.

Post-translationally, N-glycosylated. Isoform 4 is glycosylated at Asn-154. As to expression, expressed in vein endothelial cells. Isoform 4 is expressed in lung, kidney, spleen, thymus and skeletal muscle.

The protein localises to the endoplasmic reticulum membrane. Functionally, target of p53/TP53 with pro-apoptotic function. This Homo sapiens (Human) protein is Inhibitor of nuclear factor kappa-B kinase-interacting protein (IKBIP).